The chain runs to 109 residues: Nucleoid-associated protein HI_0442 (109 aa).

The protein belongs to the YbaB/EbfC family. Homodimer.

It is found in the cytoplasm. The protein localises to the nucleoid. Functionally, binds to DNA and alters its conformation. May be involved in regulation of gene expression, nucleoid organization and DNA protection. This chain is Nucleoid-associated protein HI_0442, found in Haemophilus influenzae (strain ATCC 51907 / DSM 11121 / KW20 / Rd).